Reading from the N-terminus, the 307-residue chain is Protoheme IX farnesyltransferase (307 aa).

A run of 8 helical transmembrane segments spans residues 32–52, 54–74, 105–125, 126–146, 169–189, 222–242, 244–264, and 287–307; these read VVELLLVTTVPTMILAARGIP, LWLVLATVVGGYMSAGSAGAF, LVFAWALGVASVLVLGFFTNW, LAAGLSVAAILIYVVFYTLIL, WAVVTNSVGWAPVILFGVIFL, VVGLQVVLYAWAMVACSLLLI, VARMGVLYTAVALVAGGWFLY, and GSIAYLTLIFLAVAIDPLLPF.

This sequence belongs to the UbiA prenyltransferase family. Protoheme IX farnesyltransferase subfamily.

It is found in the cell membrane. It carries out the reaction heme b + (2E,6E)-farnesyl diphosphate + H2O = Fe(II)-heme o + diphosphate. Its pathway is porphyrin-containing compound metabolism; heme O biosynthesis; heme O from protoheme: step 1/1. Converts heme B (protoheme IX) to heme O by substitution of the vinyl group on carbon 2 of heme B porphyrin ring with a hydroxyethyl farnesyl side group. The sequence is that of Protoheme IX farnesyltransferase from Leifsonia xyli subsp. xyli (strain CTCB07).